The following is a 250-amino-acid chain: Small ribosomal subunit protein uS5 (250 aa).

Over residues 1 to 22 the composition is skewed to polar residues; it reads MNVVETSSEMNSNVEKASTPKQ. The interval 1–40 is disordered; it reads MNVVETSSEMNSNVEKASTPKQENNKRFERKSRPSSRQKV. The S5 DRBM domain maps to 45–108; it reads FEEKVVTIRR…KEAKKNLVSV (64 aa).

This sequence belongs to the universal ribosomal protein uS5 family. In terms of assembly, part of the 30S ribosomal subunit. Contacts proteins S4 and S8.

With S4 and S12 plays an important role in translational accuracy. Its function is as follows. Located at the back of the 30S subunit body where it stabilizes the conformation of the head with respect to the body. This chain is Small ribosomal subunit protein uS5, found in Mycoplasma capricolum subsp. capricolum (strain California kid / ATCC 27343 / NCTC 10154).